Consider the following 189-residue polypeptide: Threonylcarbamoyl-AMP synthase (189 aa).

Residues 7-189 (NFTVKGLTEQ…DAITGKIIRK (183 aa)) form the YrdC-like domain.

Belongs to the SUA5 family. TsaC subfamily.

It localises to the cytoplasm. The enzyme catalyses L-threonine + hydrogencarbonate + ATP = L-threonylcarbamoyladenylate + diphosphate + H2O. Functionally, required for the formation of a threonylcarbamoyl group on adenosine at position 37 (t(6)A37) in tRNAs that read codons beginning with adenine. Catalyzes the conversion of L-threonine, HCO(3)(-)/CO(2) and ATP to give threonylcarbamoyl-AMP (TC-AMP) as the acyladenylate intermediate, with the release of diphosphate. The polypeptide is Threonylcarbamoyl-AMP synthase (Blochmanniella floridana).